We begin with the raw amino-acid sequence, 325 residues long: Delta(1)-pyrroline-2-carboxylate reductase (325 aa).

It belongs to the ornithine cyclodeaminase/mu-crystallin family.

The enzyme catalyses L-proline + NAD(+) = 1-pyrroline-2-carboxylate + NADH + H(+). It catalyses the reaction L-proline + NADP(+) = 1-pyrroline-2-carboxylate + NADPH + H(+). Catalyzes the reduction of Delta(1)-pyrroline-2-carboxylate (Pyr2C) to L-proline, using preferentially NADPH over NADH as the electron donor. Is likely involved in a degradation pathway that converts trans-3-hydroxy-L-proline (t3LHyp) to L-proline. The sequence is that of Delta(1)-pyrroline-2-carboxylate reductase from Bacillus thuringiensis subsp. konkukian (strain 97-27).